The following is a 433-amino-acid chain: Legumain (433 aa).

The N-terminal stretch at 1–17 (MVWKVAVFLSAALVIGA) is a signal peptide. The N-linked (GlcNAc...) asparagine glycan is linked to asparagine 91. Histidine 148 is an active-site residue. N-linked (GlcNAc...) asparagine glycosylation is present at asparagine 167. The active-site Nucleophile is the cysteine 189. N-linked (GlcNAc...) asparagine glycans are attached at residues asparagine 263 and asparagine 272. Residues 324 to 433 (DLEESRQLTE…SMDHVCLGHY (110 aa)) constitute a propeptide that is removed on maturation. 2 cysteine pairs are disulfide-bonded: cysteine 378–cysteine 412 and cysteine 390–cysteine 429.

Belongs to the peptidase C13 family. Homodimer before autocatalytic removal of the propeptide. Monomer after autocatalytic processing. May interact with integrins. In terms of processing, activated by autocatalytic processing at pH 4.

It is found in the lysosome. It carries out the reaction Hydrolysis of proteins and small molecule substrates at -Asn-|-Xaa- bonds.. Has a strict specificity for hydrolysis of asparaginyl bonds. Can also cleave aspartyl bonds slowly, especially under acidic conditions. Involved in the processing of proteins for MHC class II antigen presentation in the lysosomal/endosomal system. Also involved in MHC class I antigen presentation in cross-presenting dendritic cells by mediating cleavage and maturation of Perforin-2 (MPEG1), thereby promoting antigen translocation in the cytosol. Required for normal lysosomal protein degradation in renal proximal tubules. Required for normal degradation of internalized EGFR. Plays a role in the regulation of cell proliferation via its role in EGFR degradation. The sequence is that of Legumain (LGMN) from Pongo abelii (Sumatran orangutan).